Consider the following 215-residue polypeptide: Small ribosomal subunit protein uS3 (215 aa).

One can recognise a KH type-2 domain in the interval 39-107 (VRQYLQKRLA…PVHINIEEIR (69 aa)).

Belongs to the universal ribosomal protein uS3 family. As to quaternary structure, part of the 30S ribosomal subunit. Forms a tight complex with proteins S10 and S14.

Binds the lower part of the 30S subunit head. Binds mRNA in the 70S ribosome, positioning it for translation. The chain is Small ribosomal subunit protein uS3 from Nitrosomonas eutropha (strain DSM 101675 / C91 / Nm57).